Consider the following 386-residue polypeptide: Putative 8-amino-7-oxononanoate synthase (386 aa).

Arg-22 contacts substrate. 109–110 (GY) serves as a coordination point for pyridoxal 5'-phosphate. Residue His-134 coordinates substrate. Pyridoxal 5'-phosphate is bound by residues Ser-182, 207–210 (DEAH), and 238–241 (TLSK). Position 241 is an N6-(pyridoxal phosphate)lysine (Lys-241). Thr-356 is a substrate binding site.

Belongs to the class-II pyridoxal-phosphate-dependent aminotransferase family. BioF subfamily. In terms of assembly, homodimer. Pyridoxal 5'-phosphate serves as cofactor.

It carries out the reaction 6-carboxyhexanoyl-[ACP] + L-alanine + H(+) = (8S)-8-amino-7-oxononanoate + holo-[ACP] + CO2. The protein operates within cofactor biosynthesis; biotin biosynthesis. Catalyzes the decarboxylative condensation of pimeloyl-[acyl-carrier protein] and L-alanine to produce 8-amino-7-oxononanoate (AON), [acyl-carrier protein], and carbon dioxide. The sequence is that of Putative 8-amino-7-oxononanoate synthase (bioF) from Nostoc sp. (strain PCC 7120 / SAG 25.82 / UTEX 2576).